The primary structure comprises 538 residues: Cytochrome P450 monooxygenase astC (538 aa).

A helical membrane pass occupies residues 18-38 (ALMLPALVGCALLIYRAFFAI). Residue Cys-481 coordinates heme.

It belongs to the cytochrome P450 family. Heme serves as cofactor.

Its subcellular location is the membrane. The protein operates within secondary metabolite biosynthesis; terpenoid biosynthesis. In terms of biological role, cytochrome P450 monooxygenase; part of the gene cluster that mediates the biosynthesis of the sesquiterpenoid aspterric acid (AA), an inhibitor of dihydroxy-acid dehydratase (DHAD) effective as an herbicide. AstC catalyzes the third and last step within the pathway and converts the alpha-epoxy carboxylate intermediate produced by the cytochrome P450 monooxygenase astC from (-)daucane into the tricyclic aspterric acid. This Aspergillus terreus (strain NIH 2624 / FGSC A1156) protein is Cytochrome P450 monooxygenase astC.